The chain runs to 263 residues: Indole-3-glycerol phosphate synthase (263 aa).

The protein belongs to the TrpC family.

It carries out the reaction 1-(2-carboxyphenylamino)-1-deoxy-D-ribulose 5-phosphate + H(+) = (1S,2R)-1-C-(indol-3-yl)glycerol 3-phosphate + CO2 + H2O. Its pathway is amino-acid biosynthesis; L-tryptophan biosynthesis; L-tryptophan from chorismate: step 4/5. This Desulfosudis oleivorans (strain DSM 6200 / JCM 39069 / Hxd3) (Desulfococcus oleovorans) protein is Indole-3-glycerol phosphate synthase.